The chain runs to 498 residues: ATP synthase subunit beta, chloroplastic (498 aa).

Residue 172-179 (GGAGVGKT) participates in ATP binding.

The protein belongs to the ATPase alpha/beta chains family. As to quaternary structure, F-type ATPases have 2 components, CF(1) - the catalytic core - and CF(0) - the membrane proton channel. CF(1) has five subunits: alpha(3), beta(3), gamma(1), delta(1), epsilon(1). CF(0) has four main subunits: a(1), b(1), b'(1) and c(9-12).

The protein resides in the plastid. It is found in the chloroplast thylakoid membrane. It carries out the reaction ATP + H2O + 4 H(+)(in) = ADP + phosphate + 5 H(+)(out). Functionally, produces ATP from ADP in the presence of a proton gradient across the membrane. The catalytic sites are hosted primarily by the beta subunits. The protein is ATP synthase subunit beta, chloroplastic of Solanum tuberosum (Potato).